The primary structure comprises 166 residues: NADH-quinone oxidoreductase subunit I (166 aa).

2 consecutive 4Fe-4S ferredoxin-type domains span residues 57-87 and 97-126; these read LRRY…IESE and TRYD…VTPI. Positions 67, 70, 73, 77, 106, 109, 112, and 116 each coordinate [4Fe-4S] cluster.

It belongs to the complex I 23 kDa subunit family. In terms of assembly, NDH-1 is composed of 14 different subunits. Subunits NuoA, H, J, K, L, M, N constitute the membrane sector of the complex. [4Fe-4S] cluster is required as a cofactor.

It is found in the cell inner membrane. It catalyses the reaction a quinone + NADH + 5 H(+)(in) = a quinol + NAD(+) + 4 H(+)(out). In terms of biological role, NDH-1 shuttles electrons from NADH, via FMN and iron-sulfur (Fe-S) centers, to quinones in the respiratory chain. The immediate electron acceptor for the enzyme in this species is believed to be ubiquinone. Couples the redox reaction to proton translocation (for every two electrons transferred, four hydrogen ions are translocated across the cytoplasmic membrane), and thus conserves the redox energy in a proton gradient. In Legionella pneumophila (strain Lens), this protein is NADH-quinone oxidoreductase subunit I.